The following is a 357-amino-acid chain: MNDNPATDKVFKEVSSLYKQYFEYAILVRKWLEIPDDLSHREIGYGMLKKVDNRNMSFNTERDYLAWVLKESPFHLYKSLSYMEYPDIVGGAAKKGLFKREVAFDIDTHKTEKCTHDDSWICEECLGEARNQVLILIEDFLFPDFGLDEKDLKIVFTGNRGYHIYLKPEDPELLKRIEKWGKNERRYFIEYILGKNLNLRNMGSRWKNILVREFNKNKIATKKFEKTSDWKTEIDNRKDTTRRTIYETIDKVKSRLELDEKVMDDDIRLLRTIGSLHGYTGLMVKEITYNSLKNNQFDPLNHGVFSKFHKKMYNVKIKQELDPLTLKGDTFDHNSTEIPASYLLFLFGHGIDFEILE.

Residues aspartate 105, aspartate 107, and aspartate 259 contribute to the active site.

This sequence belongs to the eukaryotic-type primase small subunit family. Heterodimer of a small subunit (PriS) and a large subunit (PriL). Requires Mg(2+) as cofactor. Mn(2+) is required as a cofactor.

Its function is as follows. Catalytic subunit of DNA primase, an RNA polymerase that catalyzes the synthesis of short RNA molecules used as primers for DNA polymerase during DNA replication. The small subunit contains the primase catalytic core and has DNA synthesis activity on its own. Binding to the large subunit stabilizes and modulates the activity, increasing the rate of DNA synthesis while decreasing the length of the DNA fragments, and conferring RNA synthesis capability. The DNA polymerase activity may enable DNA primase to also catalyze primer extension after primer synthesis. May also play a role in DNA repair. This chain is DNA primase small subunit PriS, found in Methanococcus maripaludis (strain DSM 14266 / JCM 13030 / NBRC 101832 / S2 / LL).